Here is a 504-residue protein sequence, read N- to C-terminus: MFENIYIQQRIEKANKLREDGINPYSNESSRNCTISKYLNVNSDIFQLEEKRDENRNYTVAGRIKFFRLMGKASFLKIEDESGMLQIYVARDNLPENFYNEVFKKNIEVGDIIEISGYPFVTGHGELSLHADSLKILTKAISPLPEKFHGIQDKELRYRQRYLDLIMNSEVRKTFHIRSKVISLTRRFFENKGFLEVETPMMHPIAGGANAKPFVTHFNALGVDRFLRIAPELYLKRLIVGGFEAVFEINRNFRNEGMDATHNPEFTSIEFYWAYKTYKDLIVLTKEYFEYLFENLNLPTILPYGEFKIDFNKFSEIPLIQSLYEIGGVPQDIVEDKDKILAFLKANNLEANANLNLGQLQGELFDEFVEAKLINPTFITEYPVEISPLARRSDEKPHLTDRFELFIAGKEIANAFSELNDPIDQLQRFEGQIAAKEAGDDEAHEMDEDFVNALSYGMAPTAGQGIGIDRLVMMLTNEHSIRDVLLFPAMKPIKQEIDLYSEEK.

Residues Glu-404 and Glu-411 each contribute to the Mg(2+) site.

Belongs to the class-II aminoacyl-tRNA synthetase family. As to quaternary structure, homodimer. Mg(2+) is required as a cofactor.

It is found in the cytoplasm. The catalysed reaction is tRNA(Lys) + L-lysine + ATP = L-lysyl-tRNA(Lys) + AMP + diphosphate. In Aliarcobacter butzleri (strain RM4018) (Arcobacter butzleri), this protein is Lysine--tRNA ligase.